The sequence spans 512 residues: Putative B3 domain-containing protein REM4 (512 aa).

The segment at residues 11–103 (NKAFFIIDLS…VFHVSPFGRS (93 aa)) is a DNA-binding region (TF-B3 1). Residues 111 to 145 (SSSTSDDDDDERTVFDDDEDDDVGDDDDNSISEDD) are disordered. Acidic residues predominate over residues 115 to 145 (SDDDDDERTVFDDDEDDDVGDDDDNSISEDD). 2 DNA-binding regions (TF-B3) span residues 169-265 (YLVA…LCPN) and 307-403 (ILTF…CSKV). The interval 408–465 (SSDGHKTADRKPRMTDQAPLAEEQTDNRVEKRAQVTEEGGPSRSTRADPGNLQQKQPC) is disordered. Composition is skewed to basic and acidic residues over residues 410–421 (DGHKTADRKPRM) and 432–442 (TDNRVEKRAQV).

It localises to the nucleus. The chain is Putative B3 domain-containing protein REM4 (REM4) from Arabidopsis thaliana (Mouse-ear cress).